Consider the following 154-residue polypeptide: Ribonuclease H (154 aa).

The region spanning 1–142 is the RNase H type-1 domain; it reads MRKQVEIFTD…CDELARAAAG (142 aa). Residues aspartate 10, glutamate 48, aspartate 70, and aspartate 134 each coordinate Mg(2+).

Belongs to the RNase H family. In terms of assembly, monomer. Mg(2+) is required as a cofactor.

It localises to the cytoplasm. The enzyme catalyses Endonucleolytic cleavage to 5'-phosphomonoester.. Functionally, endonuclease that specifically degrades the RNA of RNA-DNA hybrids. This is Ribonuclease H from Pectobacterium carotovorum subsp. carotovorum (strain PC1).